A 1004-amino-acid polypeptide reads, in one-letter code: 2-oxoglutarate dehydrogenase E1 component (1004 aa).

This sequence belongs to the alpha-ketoglutarate dehydrogenase family. In terms of assembly, homodimer. Part of the 2-oxoglutarate dehydrogenase (OGDH) complex composed of E1 (2-oxoglutarate dehydrogenase), E2 (dihydrolipoamide succinyltransferase) and E3 (dihydrolipoamide dehydrogenase); the complex contains multiple copies of the three enzymatic components (E1, E2 and E3). Thiamine diphosphate serves as cofactor.

The enzyme catalyses N(6)-[(R)-lipoyl]-L-lysyl-[protein] + 2-oxoglutarate + H(+) = N(6)-[(R)-S(8)-succinyldihydrolipoyl]-L-lysyl-[protein] + CO2. E1 component of the 2-oxoglutarate dehydrogenase (OGDH) complex which catalyzes the decarboxylation of 2-oxoglutarate, the first step in the conversion of 2-oxoglutarate to succinyl-CoA and CO(2). The protein is 2-oxoglutarate dehydrogenase E1 component of Brucella suis (strain ATCC 23445 / NCTC 10510).